The following is a 553-amino-acid chain: Putative transport protein YidE (553 aa).

5 consecutive transmembrane segments (helical) span residues 4–24 (IALT…IGNV), 28–48 (GVGL…HFVS), 65–85 (FGLI…FFAS), 95–115 (LFAV…HKLF), and 158–178 (MSYA…MWML). RCK C-terminal domains are found at residues 191-276 (QQHE…VIGQ) and 279-361 (DTSL…VLGN). The next 6 helical transmembrane spans lie at 371 to 391 (MLPV…PVFV), 393 to 413 (GFPA…ALIL), 439 to 459 (IVLF…HTLV), 464 to 484 (LSWI…VGIL), 493 to 513 (YLTM…LAFA), and 533 to 553 (LVMF…WSIG).

Belongs to the AAE transporter (TC 2.A.81) family. YidE subfamily.

It is found in the cell membrane. The sequence is that of Putative transport protein YidE from Escherichia coli O127:H6 (strain E2348/69 / EPEC).